The chain runs to 715 residues: Protein DENND6 homolog (715 aa).

Residues 13-58 (MIFKEEEIKKQQILLEKEEKEKQEQQQKKLNKDNIFKLEEEGKKLE) adopt a coiled-coil conformation. The 178-residue stretch at 96–273 (NSFCIINFDL…VKQHQLGGGS (178 aa)) folds into the uDENN domain. Disordered regions lie at residues 269-296 (LGGG…SNTT) and 392-416 (SGTR…NNNN). The 178-residue stretch at 299-476 (SPSIWSEMKL…KDLLTRHVLD (178 aa)) folds into the cDENN domain. The segment covering 399–416 (SNNNNNQDDSEYNNNNNN) has biased composition (low complexity). The dDENN domain maps to 478 to 600 (KEKILSEYKP…KQWLDDKRAQ (123 aa)).

The protein belongs to the DENND6 family.

The protein is Protein DENND6 homolog of Dictyostelium discoideum (Social amoeba).